Reading from the N-terminus, the 514-residue chain is 2,3-bisphosphoglycerate-independent phosphoglycerate mutase (514 aa).

Aspartate 13 and serine 63 together coordinate Mn(2+). Serine 63 serves as the catalytic Phosphoserine intermediate. Substrate is bound by residues histidine 124, 154–155 (RD), arginine 186, arginine 192, 258–261 (RADR), and lysine 332. Residues aspartate 399, histidine 403, aspartate 440, histidine 441, and histidine 459 each coordinate Mn(2+).

It belongs to the BPG-independent phosphoglycerate mutase family. In terms of assembly, monomer. The cofactor is Mn(2+).

The enzyme catalyses (2R)-2-phosphoglycerate = (2R)-3-phosphoglycerate. The protein operates within carbohydrate degradation; glycolysis; pyruvate from D-glyceraldehyde 3-phosphate: step 3/5. Catalyzes the interconversion of 2-phosphoglycerate and 3-phosphoglycerate. In Legionella pneumophila (strain Corby), this protein is 2,3-bisphosphoglycerate-independent phosphoglycerate mutase.